A 262-amino-acid chain; its full sequence is Hemin import ATP-binding protein HmuV (262 aa).

The 242-residue stretch at 3–244 (LQARNLTLAR…DHMRRVYGIE (242 aa)) folds into the ABC transporter domain. 35–42 (GANGAGKS) contacts ATP.

Belongs to the ABC transporter superfamily. Heme (hemin) importer (TC 3.A.1.14.5) family. The complex is composed of two ATP-binding proteins (HmuV), two transmembrane proteins (HmuU) and a solute-binding protein (HmuT).

Its subcellular location is the cell inner membrane. Part of the ABC transporter complex HmuTUV involved in hemin import. Responsible for energy coupling to the transport system. The polypeptide is Hemin import ATP-binding protein HmuV (Bordetella parapertussis (strain 12822 / ATCC BAA-587 / NCTC 13253)).